The chain runs to 190 residues: Interferon alpha-11 (190 aa).

A signal peptide spans 1–23 (MARLCAFLMILIVMSYWSTCSLG). 2 cysteine pairs are disulfide-bonded: Cys24/Cys122 and Cys52/Cys162. Asn101 carries N-linked (GlcNAc...) asparagine glycosylation.

It belongs to the alpha/beta interferon family. In terms of processing, N-glycosylated.

The protein resides in the secreted. Has antiviral and antiproliferative activities. Produced by macrophages and stimulates the production of two enzymes: a protein kinase and an oligoadenylate synthetase. During viral infection, mediates antiviral effect, either directly by inducing interferon-stimulated genes, either indirectly through stimulation of natural killer cells enabling them to control viral replication. In Mus musculus (Mouse), this protein is Interferon alpha-11 (Ifna11).